Consider the following 141-residue polypeptide: Hemoglobin subunit alpha-D (141 aa).

Residues 1–141 form the Globin domain; sequence MLTAEDKKLI…VAAVLAEKYR (141 aa). Residues histidine 58 and histidine 87 each coordinate heme b.

This sequence belongs to the globin family. In terms of assembly, heterotetramer of two alpha-D chains and two beta chains. Red blood cells.

In terms of biological role, involved in oxygen transport from the lung to the various peripheral tissues. The protein is Hemoglobin subunit alpha-D (HBAD) of Accipiter gentilis (Northern goshawk).